We begin with the raw amino-acid sequence, 1109 residues long: Myosin ID heavy chain (1109 aa).

In terms of domain architecture, Myosin motor spans 7–687 (HGVDDMVMLS…TVFNLEELRE (681 aa)). 101–108 (GESGAGKT) is a binding site for ATP. Residues 564–586 (IGALVKALSACTPHYIRCIKPNG) form an actin-binding region. The 195-residue stretch at 725–919 (KERRRLSIER…VSTPSDGLPA (195 aa)) folds into the TH1 domain. Residues 958-1017 (NVKPSAKALYDFDAESSMELSFKEGDILTVLDQSSGDWWDAELKGRRGKVPSNYLQLIKN) form the SH3 domain. The segment at 1017–1109 (NAAPPRAGGP…APRGGMAPRV (93 aa)) is disordered. A compositionally biased stretch (low complexity) spans 1030–1043 (TGNRAPTTTTTSGG).

It belongs to the TRAFAC class myosin-kinesin ATPase superfamily. Myosin family. In terms of assembly, myosin I heavy chain is single-headed. Dimer of a heavy and a light chain. Inability to self-assemble into filaments.

It is found in the cell projection. The protein resides in the pseudopodium. The protein localises to the cytoplasm. Its subcellular location is the cell cortex. Functionally, myosin is a protein that binds to actin and has ATPase activity that is activated by actin. Myosin id may have a role in chemotaxis and aggregation; it could serve to stabilize and even retract cortical structures, such as pseudopods and lamellopods. Involved in the process of phagocytosis. This chain is Myosin ID heavy chain (myoD), found in Dictyostelium discoideum (Social amoeba).